A 225-amino-acid polypeptide reads, in one-letter code: Thaumatin-like protein (225 aa).

The signal sequence occupies residues 1 to 24 (MSTFKSLSLSALLFIAFLFTCARG). Disulfide bonds link Cys-33/Cys-224, Cys-74/Cys-84, Cys-89/Cys-95, Cys-140/Cys-213, Cys-146/Cys-196, Cys-154/Cys-164, Cys-168/Cys-177, and Cys-178/Cys-183. N-linked (GlcNAc...) asparagine glycosylation occurs at Asn-187.

The protein belongs to the thaumatin family. N-glycosylated. In terms of tissue distribution, woody stem plug.

It localises to the secreted. In terms of biological role, has antifungal activity. This Actinidia deliciosa (Kiwi) protein is Thaumatin-like protein (tlp).